Consider the following 78-residue polypeptide: Conotoxin Cl14.9 (78 aa).

The N-terminal stretch at 1–22 is a signal peptide; the sequence is MTAKATLLVLALVVMATSGVSS. The propeptide occupies 23 to 47; that stretch reads ASVAGGPVVNSDTVSRSDPERLSTR. Ile70 carries the isoleucine amide modification. The propeptide occupies 74–78; the sequence is DITQQ.

Contains 2 disulfide bonds. In terms of tissue distribution, expressed by the venom duct.

It localises to the secreted. This chain is Conotoxin Cl14.9, found in Californiconus californicus (California cone).